Consider the following 209-residue polypeptide: UPF0502 protein mll4256 (209 aa).

This sequence belongs to the UPF0502 family.

This chain is UPF0502 protein mll4256, found in Mesorhizobium japonicum (strain LMG 29417 / CECT 9101 / MAFF 303099) (Mesorhizobium loti (strain MAFF 303099)).